We begin with the raw amino-acid sequence, 656 residues long: Putative L-type lectin-domain containing receptor kinase V.2 (656 aa).

The N-terminal stretch at Met-1 to Cys-23 is a signal peptide. Over Ser-24 to Lys-276 the chain is Extracellular. Positions Gly-29 to Asn-248 are legume-lectin like. Asn-78, Asn-124, Asn-159, Asn-190, and Asn-257 each carry an N-linked (GlcNAc...) asparagine glycan. A helical membrane pass occupies residues Ile-277 to Val-297. Over Met-298–Arg-656 the chain is Cytoplasmic. A Protein kinase domain is found at Phe-334 to Leu-615. ATP-binding positions include Leu-340–Val-348 and Lys-363. The Proton acceptor role is filled by Asp-459.

In the C-terminal section; belongs to the protein kinase superfamily. Ser/Thr protein kinase family. It in the N-terminal section; belongs to the leguminous lectin family.

Its subcellular location is the cell membrane. The catalysed reaction is L-seryl-[protein] + ATP = O-phospho-L-seryl-[protein] + ADP + H(+). It carries out the reaction L-threonyl-[protein] + ATP = O-phospho-L-threonyl-[protein] + ADP + H(+). This chain is Putative L-type lectin-domain containing receptor kinase V.2 (LECRK52), found in Arabidopsis thaliana (Mouse-ear cress).